Here is a 464-residue protein sequence, read N- to C-terminus: Uronate isomerase (464 aa).

Belongs to the metallo-dependent hydrolases superfamily. Uronate isomerase family.

It catalyses the reaction D-glucuronate = D-fructuronate. It carries out the reaction aldehydo-D-galacturonate = keto-D-tagaturonate. The protein operates within carbohydrate metabolism; pentose and glucuronate interconversion. This chain is Uronate isomerase, found in Caldicellulosiruptor bescii (strain ATCC BAA-1888 / DSM 6725 / KCTC 15123 / Z-1320) (Anaerocellum thermophilum).